A 364-amino-acid polypeptide reads, in one-letter code: Ferrochelatase (364 aa).

2 residues coordinate Fe cation: histidine 210 and glutamate 291.

Belongs to the ferrochelatase family.

It localises to the cytoplasm. It catalyses the reaction heme b + 2 H(+) = protoporphyrin IX + Fe(2+). The protein operates within porphyrin-containing compound metabolism; protoheme biosynthesis; protoheme from protoporphyrin-IX: step 1/1. Catalyzes the ferrous insertion into protoporphyrin IX. This is Ferrochelatase from Idiomarina loihiensis (strain ATCC BAA-735 / DSM 15497 / L2-TR).